A 399-amino-acid polypeptide reads, in one-letter code: Probable 2-isopropylmalate synthase (399 aa).

The 253-residue stretch at 20 to 272 (VRIFDTTLRD…RTGVNTKLLY (253 aa)) folds into the Pyruvate carboxyltransferase domain. The a divalent metal cation site is built by Asp-29, His-210, His-212, and Asn-246.

Belongs to the alpha-IPM synthase/homocitrate synthase family. In terms of assembly, homodimer. A divalent metal cation is required as a cofactor.

It catalyses the reaction 3-methyl-2-oxobutanoate + acetyl-CoA + H2O = (2S)-2-isopropylmalate + CoA + H(+). It participates in amino-acid biosynthesis; L-leucine biosynthesis; L-leucine from 3-methyl-2-oxobutanoate: step 1/4. Catalyzes the condensation of the acetyl group of acetyl-CoA with 3-methyl-2-oxobutanoate (2-oxoisovalerate) to form 3-carboxy-3-hydroxy-4-methylpentanoate (2-isopropylmalate). This chain is Probable 2-isopropylmalate synthase (leuA), found in Ignicoccus hospitalis (strain KIN4/I / DSM 18386 / JCM 14125).